Consider the following 313-residue polypeptide: Porphobilinogen deaminase (313 aa).

The residue at position 242 (C242) is an S-(dipyrrolylmethanemethyl)cysteine.

Belongs to the HMBS family. Monomer. Dipyrromethane serves as cofactor.

It carries out the reaction 4 porphobilinogen + H2O = hydroxymethylbilane + 4 NH4(+). Its pathway is porphyrin-containing compound metabolism; protoporphyrin-IX biosynthesis; coproporphyrinogen-III from 5-aminolevulinate: step 2/4. In terms of biological role, tetrapolymerization of the monopyrrole PBG into the hydroxymethylbilane pre-uroporphyrinogen in several discrete steps. This Yersinia pestis bv. Antiqua (strain Angola) protein is Porphobilinogen deaminase.